Here is a 354-residue protein sequence, read N- to C-terminus: NADH-quinone oxidoreductase subunit H (354 aa).

8 helical membrane passes run 22-42, 91-111, 124-144, 168-188, 203-223, 255-275, 291-311, and 326-346; these read ILIR…YLIL, YLIA…VIPF, LLYV…AGWA, MGFA…SAIV, VLSW…ISGV, LFFL…ALLF, IPGF…FIWI, and LGWK…AIWI.

This sequence belongs to the complex I subunit 1 family. As to quaternary structure, NDH-1 is composed of 14 different subunits. Subunits NuoA, H, J, K, L, M, N constitute the membrane sector of the complex.

It is found in the cell inner membrane. The enzyme catalyses a quinone + NADH + 5 H(+)(in) = a quinol + NAD(+) + 4 H(+)(out). Its function is as follows. NDH-1 shuttles electrons from NADH, via FMN and iron-sulfur (Fe-S) centers, to quinones in the respiratory chain. The immediate electron acceptor for the enzyme in this species is believed to be ubiquinone. Couples the redox reaction to proton translocation (for every two electrons transferred, four hydrogen ions are translocated across the cytoplasmic membrane), and thus conserves the redox energy in a proton gradient. This subunit may bind ubiquinone. The chain is NADH-quinone oxidoreductase subunit H from Cupriavidus pinatubonensis (strain JMP 134 / LMG 1197) (Cupriavidus necator (strain JMP 134)).